Here is a 440-residue protein sequence, read N- to C-terminus: Chaperone SurA (440 aa).

A signal peptide spans 1–25 (MGTKLSSRSPFSLPFLTLLAGMAIA). 2 consecutive PpiC domains span residues 182–283 (SDEY…KLVE) and 294–392 (IDQT…QVIE).

It localises to the periplasm. The catalysed reaction is [protein]-peptidylproline (omega=180) = [protein]-peptidylproline (omega=0). Chaperone involved in the correct folding and assembly of outer membrane proteins. Recognizes specific patterns of aromatic residues and the orientation of their side chains, which are found more frequently in integral outer membrane proteins. May act in both early periplasmic and late outer membrane-associated steps of protein maturation. This Nitrosospira multiformis (strain ATCC 25196 / NCIMB 11849 / C 71) protein is Chaperone SurA.